We begin with the raw amino-acid sequence, 778 residues long: Lon protease (778 aa).

A Lon N-terminal domain is found at 8 to 202; that stretch reads LPLIPLRGLI…NVLTVIKDEL (195 aa). Residue 354-361 participates in ATP binding; the sequence is GPPGVGKT. A Lon proteolytic domain is found at 591–772; it reads EDKIGVVTGM…DTVLENALIG (182 aa). Residues Ser-678 and Lys-721 contribute to the active site.

Belongs to the peptidase S16 family. Homohexamer. Organized in a ring with a central cavity.

It localises to the cytoplasm. The catalysed reaction is Hydrolysis of proteins in presence of ATP.. ATP-dependent serine protease that mediates the selective degradation of mutant and abnormal proteins as well as certain short-lived regulatory proteins. Required for cellular homeostasis and for survival from DNA damage and developmental changes induced by stress. Degrades polypeptides processively to yield small peptide fragments that are 5 to 10 amino acids long. Binds to DNA in a double-stranded, site-specific manner. This Clostridium acetobutylicum (strain ATCC 824 / DSM 792 / JCM 1419 / IAM 19013 / LMG 5710 / NBRC 13948 / NRRL B-527 / VKM B-1787 / 2291 / W) protein is Lon protease.